The sequence spans 503 residues: Cytochrome P450 71B6 (503 aa).

Residues 10–30 (TELLPWLLLLLIPPLLIFFLL) form a helical membrane-spanning segment. C446 serves as a coordination point for heme.

It belongs to the cytochrome P450 family. Requires heme as cofactor.

Its subcellular location is the membrane. This chain is Cytochrome P450 71B6 (CYP71B6), found in Arabidopsis thaliana (Mouse-ear cress).